The chain runs to 330 residues: Aspartate--ammonia ligase (330 aa).

This sequence belongs to the class-II aminoacyl-tRNA synthetase family. AsnA subfamily.

The protein localises to the cytoplasm. The catalysed reaction is L-aspartate + NH4(+) + ATP = L-asparagine + AMP + diphosphate + H(+). Its pathway is amino-acid biosynthesis; L-asparagine biosynthesis; L-asparagine from L-aspartate (ammonia route): step 1/1. This Klebsiella pneumoniae (strain 342) protein is Aspartate--ammonia ligase.